A 481-amino-acid chain; its full sequence is Alpha-ketoglutaric semialdehyde dehydrogenase 1 (481 aa).

Residues 154-155, 178-181, and 231-232 each bind NADP(+); these read WN, KAPE, and GS. Residue Glu-253 is the Proton acceptor of the active site. An NADP(+)-binding site is contributed by Leu-254. The Nucleophile role is filled by Cys-287. Glu-384 is a binding site for NADP(+).

The protein belongs to the aldehyde dehydrogenase family. As to quaternary structure, homotetramer.

The enzyme catalyses 2,5-dioxopentanoate + NADP(+) + H2O = 2-oxoglutarate + NADPH + 2 H(+). It catalyses the reaction 2,5-dioxopentanoate + NAD(+) + H2O = 2-oxoglutarate + NADH + 2 H(+). The catalysed reaction is succinate semialdehyde + NAD(+) + H2O = succinate + NADH + 2 H(+). Functionally, catalyzes the NAD(P)(+)-dependent oxidation of alpha-ketoglutaric semialdehyde (alphaKGSA) to alpha-ketoglutarate. Is involved in a degradation pathway of L-arabinose that allows A.brasilense to grow on L-arabinose as a sole carbon source. Prefers NAD(+) to NADP(+) as a cosubstrate. Displays broad substrate specificity: exhibits the highest activity with alphaKGSA and succinic semialdehyde as substrates, but to a lesser extent, is also active with glutaraldehyde, benzaldehyde, and a number of aldehydes from C3 to C8. This is Alpha-ketoglutaric semialdehyde dehydrogenase 1 (araE) from Azospirillum brasilense.